The primary structure comprises 238 residues: Large ribosomal subunit protein uL3 (238 aa).

Residue glutamine 157 is modified to N5-methylglutamine.

It belongs to the universal ribosomal protein uL3 family. As to quaternary structure, part of the 50S ribosomal subunit. Forms a cluster with proteins L14 and L19. Post-translationally, methylated by PrmB.

Its function is as follows. One of the primary rRNA binding proteins, it binds directly near the 3'-end of the 23S rRNA, where it nucleates assembly of the 50S subunit. The protein is Large ribosomal subunit protein uL3 of Ruthia magnifica subsp. Calyptogena magnifica.